The following is a 1577-amino-acid chain: MVQKKFCPRLLDYLVIVGARHPSSDSVAQTPELLRRYPLEDHPEFPLPPDVVFFCQPEGCLSVRQRRMSLRDDTSFVFTLTDKDTGVTRYGICVNFYRSFQKRMPKEKVEGGAGPRGKEGAHTSGASEEAATGSSESGSTLQPPSADSTPDINQSPWGKRRAKAGSRSRNSTLTSLCVLSHYPFFSTFRECLYTLKRLVDCCSERLLGKKLGIPRGVQRDTMWRIFTGSLLVEEKSSALLQDLREIEAWIYRLLRSPVPVSGQKRVDIEVLPQELQQALTFALPDPSRFTLVDFPLHLPLELLGVDACLQVLTCILLEHKVVLQSRDYNALSMSVMAFVAMIYPLEYMFPVIPLLPTCMASAEQLLLAPTPYIIGVPASFFLYKLDFKMPDDVWLVDLDSNRVIAPTNAEVLPILPEPESLELKKHLKQALASMSLNTQPILNLEKFHEGQEIPLLLGRPSNDLQSTPSTEFNPLIYGNDVDSVDVATRVAMVRFFNSANVLQGFQMHTRTLRLFPRPVVAFQAGSFLASRPRQTPFAEKLARTQAVEYFGEWILNPSNYAFQRIHNNTFDPALIGDKPKWYAHQLQPIHYRVYDGNSQLAEALSVPPERDSDSDPTEDSGSDSQDYDDSSSSYSSLGDFVSEMMKCDINGDTPNVDPLTHAALGDASEVEIDELQPQKEGEEPGPDSENSQENPPLRSSSSTTASSSPSTVVHSAHSEAADSTEMGDKATAGISKPLPPVPPSICKSTVDRRQTETGEGSVCQRTYDNPYFEPQYGFPPEEDEEEQGESYTPRFSQHVSGSRAQKLLRPNSLKLASDSDAESDSRASSPNSTVSNNSTEGFGGIMSFASSLYRNHSTSFSLSNLTLPTKGAREKTTPFPSLKVFGLNTLMEIVTEAGPGSGEGNRRALVDQKSSVIKHSPTVKREPSSPQGRSSNSSENQQFLKEVVHSVLDGQGVGWLNMKKVRRLLESEQLRVFVLSKLNRAVQSEDDARQDVIQDVEISRKVYKGMLDLLKCTVLSLEQSYAHAGLGGMASIFGLLEIAQTHYYSKEPDKRKRSPTENVNTPVGKDPGLAGRGDPKAMAQLRVPQLGPRAPSATGKGPKELDTRSLKEENFVASVELWNKHQEVKKQKALEKQRPEGIKPVFDLGETEEKKSQMSADSGVSLTSASQRTDQDSVIGVSPAVMIRSSSQDSEVSTVSNSSGETLGADSDLSSNAGDGPGGEGSAHLASSRATLSDSEIETNSATSAIFGKAHSLKPKEKPAGSPIRSSEDVSQRVYLYEGLLGRDKGSMWDQLEDAAMETFSLSKERSTLWDQMQFWEDAFLDAVMLEREGMGMDQGPQEMIDRYLSLGEHDRKRLEDDEDRLLATLLHNLISYMLLMKVNKNDIRKKVRRLMGKSHIGLVYSQQVNEVLDQLNSLNGRDLSIRSSGSRHMKKQTFVVHAGTDTNGDIFFMEVCDDCVVLRSNIGTVYERWWYEKLINMTYCPKTKVLCLWRRNGSETQLNKFYTKKCRELYYCVKDSMERAAARQQSIKPGPELGGEFPVQDMKTGEGGLLQVTLEGINLKFMHNQFLKLKKW.

The uDENN domain maps to 13-267 (YLVIVGARHP…VPVSGQKRVD (255 aa)). Residues 106–121 (KEKVEGGAGPRGKEGA) are compositionally biased toward basic and acidic residues. The segment at 106–166 (KEKVEGGAGP…WGKRRAKAGS (61 aa)) is disordered. The segment covering 123-140 (TSGASEEAATGSSESGST) has biased composition (low complexity). The segment covering 141–156 (LQPPSADSTPDINQSP) has biased composition (polar residues). Ser-155 carries the post-translational modification Phosphoserine. A cDENN domain is found at 288–428 (RFTLVDFPLH…ESLELKKHLK (141 aa)). A dDENN domain is found at 430–564 (ALASMSLNTQ…LNPSNYAFQR (135 aa)). Disordered regions lie at residues 604–635 (LSVP…SSYS) and 676–840 (QPQK…NSTE). Positions 614 to 629 (SDPTEDSGSDSQDYDD) are enriched in acidic residues. Ser-688 and Ser-691 each carry phosphoserine. The span at 688–698 (SENSQENPPLR) shows a compositional bias: polar residues. Low complexity predominate over residues 699–715 (SSSSTTASSSPSTVVHS). Residues 793–803 (PRFSQHVSGSR) are compositionally biased toward polar residues. Phosphoserine is present on residues Ser-812, Ser-817, and Ser-819. Positions 826-839 (RASSPNSTVSNNST) are enriched in low complexity. Phosphoserine occurs at positions 857, 861, 915, 920, 929, and 1058. Disordered stretches follow at residues 912–940 (QKSS…SSEN), 1050–1109 (KEPD…DTRS), and 1127–1272 (EVKK…RSSE). The segment covering 928-938 (SSPQGRSSNSS) has biased composition (low complexity). Residues Thr-1060 and Thr-1065 each carry the phosphothreonine modification. The residue at position 1109 (Ser-1109) is a Phosphoserine. Over residues 1127–1141 (EVKKQKALEKQRPEG) the composition is skewed to basic and acidic residues. Polar residues predominate over residues 1157–1172 (QMSADSGVSLTSASQR). Positions 1189–1203 (SSSQDSEVSTVSNSS) are enriched in low complexity. Over residues 1232–1248 (SRATLSDSEIETNSATS) the composition is skewed to polar residues. Thr-1235 carries the phosphothreonine modification. 2 positions are modified to phosphoserine: Ser-1237 and Ser-1266. A Death domain is found at 1336–1411 (GMDQGPQEMI…GLVYSQQVNE (76 aa)).

The protein belongs to the MADD family. In terms of assembly, interacts (via death domain) with TNFRSF1A (via death domain). Interacts with PIDD1. Interacts with YWHAZ. Interacts (via death domain) with KIF1B; links the motor KIF1B to Rab3-carrying vesicles in anterograde synaptic vesicle transport. Interacts with KIF1A. Interacts (via uDENN domain) with RAB3A, RAB3B, RAB3C and RAB3D; the GTP-bound form of the Rab proteins is preferred for interaction. In terms of tissue distribution, expressed in the brain.

The protein resides in the cell membrane. It is found in the cytoplasm. The protein localises to the cell projection. Its subcellular location is the axon. Its function is as follows. Guanyl-nucleotide exchange factor that regulates small GTPases of the Rab family. Converts GDP-bound inactive form of RAB27A and RAB27B to the GTP-bound active forms. Converts GDP-bound inactive form of RAB3A, RAB3C and RAB3D to the GTP-bound active forms, GTPases involved in synaptic vesicle exocytosis and vesicle secretion. Plays a role in synaptic vesicle formation and in vesicle trafficking at the neuromuscular junction. Involved in up-regulating a post-docking step of synaptic exocytosis in central synapses. Probably by binding to the motor proteins KIF1B and KIF1A, mediates motor-dependent transport of GTP-RAB3A-positive vesicles to the presynaptic nerve terminals. Plays a role in TNFA-mediated activation of the MAPK pathway, including ERK1/2. May link TNFRSF1A with MAP kinase activation. May be involved in the regulation of TNFA-induced apoptosis. The protein is MAP kinase-activating death domain protein of Mus musculus (Mouse).